Reading from the N-terminus, the 115-residue chain is Nucleoid-associated protein Rpic_1036 (115 aa).

The protein belongs to the YbaB/EbfC family. In terms of assembly, homodimer.

It localises to the cytoplasm. The protein resides in the nucleoid. Functionally, binds to DNA and alters its conformation. May be involved in regulation of gene expression, nucleoid organization and DNA protection. This chain is Nucleoid-associated protein Rpic_1036, found in Ralstonia pickettii (strain 12J).